Reading from the N-terminus, the 523-residue chain is UDP-glucuronosyltransferase 3A1 (523 aa).

Residues 1–22 form the signal peptide; the sequence is MAAHRSWLLVSFFLLEVLLLEA. The Extracellular segment spans residues 23–487; it reads AKILTISTLS…QPWHEQYMLD (465 aa). N70 carries N-linked (GlcNAc...) asparagine glycosylation. Residues 488 to 508 traverse the membrane as a helical segment; it reads VFLFLLGLTLGTLWLSVKVLV. The Cytoplasmic segment spans residues 509 to 523; sequence AVTRYLSISRKVKQA.

The protein belongs to the UDP-glycosyltransferase family. As to expression, highly expressed in kidney, while it is expressed at low levels in liver. Not detected in other tissues examined.

It localises to the membrane. It carries out the reaction glucuronate acceptor + UDP-alpha-D-glucuronate = acceptor beta-D-glucuronoside + UDP + H(+). UDP-glucuronosyltransferases catalyze phase II biotransformation reactions in which lipophilic substrates are conjugated with glucuronic acid to increase water solubility and enhance excretion. They are of major importance in the conjugation and subsequent elimination of potentially toxic xenobiotics and endogenous compounds. The sequence is that of UDP-glucuronosyltransferase 3A1 (Ugt3a1) from Mus musculus (Mouse).